The chain runs to 439 residues: Dolichyl-diphosphooligosaccharide--protein glycosyltransferase 48 kDa subunit (439 aa).

Residues 1–25 (MELGAAARAWSLLWLLLPLLGLVGA) form the signal peptide. Residues 27 to 410 (GPRTLVLLDN…YERFIPSAYP (384 aa)) lie on the Lumenal side of the membrane. A helical transmembrane segment spans residues 411–430 (YYASAFSMMVGLFIFSVVFL). At 431-439 (HMKEKEKSD) the chain is on the cytoplasmic side.

The protein belongs to the DDOST 48 kDa subunit family. Component of the oligosaccharyltransferase (OST) complex. OST exists in two different complex forms which contain common core subunits RPN1, RPN2, OST48, OST4, DAD1 and TMEM258, either STT3A or STT3B as catalytic subunits, and form-specific accessory subunits. STT3A complex assembly occurs through the formation of 3 subcomplexes. Subcomplex 1 contains RPN1 and TMEM258, subcomplex 2 contains the STT3A-specific subunits STT3A, DC2/OSTC, and KCP2 as well as the core subunit OST4, and subcomplex 3 contains RPN2, DAD1, and OST48. The STT3A complex can form stable complexes with the Sec61 complex or with both the Sec61 and TRAP complexes. Interacts with SMIM22.

It localises to the endoplasmic reticulum membrane. It functions in the pathway protein modification; protein glycosylation. Its function is as follows. Subunit of the oligosaccharyl transferase (OST) complex that catalyzes the initial transfer of a defined glycan (Glc(3)Man(9)GlcNAc(2) in eukaryotes) from the lipid carrier dolichol-pyrophosphate to an asparagine residue within an Asn-X-Ser/Thr consensus motif in nascent polypeptide chains, the first step in protein N-glycosylation. N-glycosylation occurs cotranslationally and the complex associates with the Sec61 complex at the channel-forming translocon complex that mediates protein translocation across the endoplasmic reticulum (ER). All subunits are required for a maximal enzyme activity. Required for the assembly of both SST3A- and SS3B-containing OST complexes. In Sus scrofa (Pig), this protein is Dolichyl-diphosphooligosaccharide--protein glycosyltransferase 48 kDa subunit.